The chain runs to 510 residues: MLPPLARIHSPADTIPVRHLHQSIGKSKKPITVVRWTPEGRRLLTGGHTGEFMLWNGTAFNFETVMDVRGQKGDIKYWRPNFNNVETIDDAHHDAVRDLAWSPSDTKFLSASDDTTLKIFDFTARTADTVLTGHNWDVKSCDWHPTKGLLVSGSKDHQVKFWDPRTARCLTTLHSHKNTVTTTRFSRVNSNLLATSSRDQTARVFDLRMMRDICILRGHEKPISSLTWHPIHSSLISTGSEDGSLYHYLLDEPNLPSGQVPTIAPYDSPDPANTPAQVIYPAHRIQYAHSATIWSLDWHPLGHILASGSKDNFTRFWSRARPGETSYMKDRFHIGEEAAEAQGTWSRGFGRRQMREEEEQEAQDEAESLVDQKNTTAQSLPGIQIAPPGLGSLQTGSGSLLPGIGAPQPAPQAGMSASMPQMDPGRLAAILSQQNPSQPQNFPSATGIPGFPMPPAMSGTPPLNIDLAELQKQLLSQGISPQNFASLAASLGSAGLPGLQSSTPDNTYRR.

WD repeat units lie at residues 26-65, 91-130, 133-172, 175-215, 218-258, and 288-327; these read KSKK…FETV, AHHD…ADTV, GHNW…CLTT, SHKN…DICI, GHEK…LPSG, and AHSA…ETSY.

It localises to the nucleus. Required for 3'-end cleavage and polyadenylation of pre-mRNAs. Also involved in chromosome segregation where it has a role in chromosome attachment to the mitotic spindle. This Aspergillus fumigatus (strain ATCC MYA-4609 / CBS 101355 / FGSC A1100 / Af293) (Neosartorya fumigata) protein is Polyadenylation factor subunit 2 (pfs2).